The following is a 195-amino-acid chain: Thymidine kinase (195 aa).

ATP is bound by residues 9–16 (STMNAGKS) and 87–90 (DEAQ). Glutamate 88 serves as the catalytic Proton acceptor. Positions 145, 147, 182, and 185 each coordinate Zn(2+).

Belongs to the thymidine kinase family. In terms of assembly, homotetramer.

It is found in the cytoplasm. The catalysed reaction is thymidine + ATP = dTMP + ADP + H(+). The sequence is that of Thymidine kinase from Mannheimia succiniciproducens (strain KCTC 0769BP / MBEL55E).